Here is a 257-residue protein sequence, read N- to C-terminus: uncharacterized protein (257 aa).

The first 22 residues, 1–22, serve as a signal peptide directing secretion; it reads MIHSKRLKMCLCLIILSVFIGA. Residue cysteine 23 is the site of N-palmitoyl cysteine attachment. The S-diacylglycerol cysteine moiety is linked to residue cysteine 23.

It belongs to the staphylococcal tandem lipoprotein family.

The protein resides in the cell membrane. This is an uncharacterized protein from Staphylococcus aureus (strain MRSA252).